The chain runs to 305 residues: tRNA pseudouridine synthase B (305 aa).

Asp-39 functions as the Nucleophile in the catalytic mechanism.

This sequence belongs to the pseudouridine synthase TruB family. Type 1 subfamily.

It catalyses the reaction uridine(55) in tRNA = pseudouridine(55) in tRNA. Functionally, responsible for synthesis of pseudouridine from uracil-55 in the psi GC loop of transfer RNAs. This is tRNA pseudouridine synthase B from Staphylococcus epidermidis (strain ATCC 35984 / DSM 28319 / BCRC 17069 / CCUG 31568 / BM 3577 / RP62A).